A 100-amino-acid chain; its full sequence is Aspartyl/glutamyl-tRNA(Asn/Gln) amidotransferase subunit C (100 aa).

This sequence belongs to the GatC family. Heterotrimer of A, B and C subunits.

It carries out the reaction L-glutamyl-tRNA(Gln) + L-glutamine + ATP + H2O = L-glutaminyl-tRNA(Gln) + L-glutamate + ADP + phosphate + H(+). The catalysed reaction is L-aspartyl-tRNA(Asn) + L-glutamine + ATP + H2O = L-asparaginyl-tRNA(Asn) + L-glutamate + ADP + phosphate + 2 H(+). Allows the formation of correctly charged Asn-tRNA(Asn) or Gln-tRNA(Gln) through the transamidation of misacylated Asp-tRNA(Asn) or Glu-tRNA(Gln) in organisms which lack either or both of asparaginyl-tRNA or glutaminyl-tRNA synthetases. The reaction takes place in the presence of glutamine and ATP through an activated phospho-Asp-tRNA(Asn) or phospho-Glu-tRNA(Gln). The polypeptide is Aspartyl/glutamyl-tRNA(Asn/Gln) amidotransferase subunit C (Herminiimonas arsenicoxydans).